The sequence spans 701 residues: Polyribonucleotide nucleotidyltransferase (701 aa).

Residues aspartate 487 and aspartate 493 each contribute to the Mg(2+) site. The region spanning proline 554–valine 613 is the KH domain. The region spanning glycine 623 to lysine 691 is the S1 motif domain.

It belongs to the polyribonucleotide nucleotidyltransferase family. In terms of assembly, component of the RNA degradosome, which is a multiprotein complex involved in RNA processing and mRNA degradation. Mg(2+) serves as cofactor.

The protein resides in the cytoplasm. It carries out the reaction RNA(n+1) + phosphate = RNA(n) + a ribonucleoside 5'-diphosphate. Involved in mRNA degradation. Catalyzes the phosphorolysis of single-stranded polyribonucleotides processively in the 3'- to 5'-direction. This Stutzerimonas stutzeri (strain A1501) (Pseudomonas stutzeri) protein is Polyribonucleotide nucleotidyltransferase.